Here is a 406-residue protein sequence, read N- to C-terminus: Enoyl-[acyl-carrier-protein] reductase [NADH] (406 aa).

Residues 48–53 (GASTGF), 74–75 (FE), 111–112 (DA), and 140–141 (IA) each bind NAD(+). Tyr226 is a substrate binding site. Tyr236 serves as the catalytic Proton donor. Residues Lys245 and 275–277 (LVT) each bind NAD(+).

Belongs to the TER reductase family. As to quaternary structure, monomer.

It carries out the reaction a 2,3-saturated acyl-[ACP] + NAD(+) = a (2E)-enoyl-[ACP] + NADH + H(+). It participates in lipid metabolism; fatty acid biosynthesis. Its function is as follows. Involved in the final reduction of the elongation cycle of fatty acid synthesis (FAS II). Catalyzes the reduction of a carbon-carbon double bond in an enoyl moiety that is covalently linked to an acyl carrier protein (ACP). The sequence is that of Enoyl-[acyl-carrier-protein] reductase [NADH] from Coxiella burnetii (strain Dugway 5J108-111).